The chain runs to 249 residues: Diaminopimelate epimerase (249 aa).

Positions 11 and 60 each coordinate substrate. The active-site Proton donor is C69. Substrate-binding positions include 70-71, N164, and 182-183; these read GN and ER. Residue C192 is the Proton acceptor of the active site. 193–194 is a binding site for substrate; it reads GT.

This sequence belongs to the diaminopimelate epimerase family. As to quaternary structure, homodimer.

It localises to the cytoplasm. The enzyme catalyses (2S,6S)-2,6-diaminopimelate = meso-2,6-diaminopimelate. It functions in the pathway amino-acid biosynthesis; L-lysine biosynthesis via DAP pathway; DL-2,6-diaminopimelate from LL-2,6-diaminopimelate: step 1/1. In terms of biological role, catalyzes the stereoinversion of LL-2,6-diaminopimelate (L,L-DAP) to meso-diaminopimelate (meso-DAP), a precursor of L-lysine and an essential component of the bacterial peptidoglycan. This is Diaminopimelate epimerase from Campylobacter jejuni subsp. jejuni serotype O:2 (strain ATCC 700819 / NCTC 11168).